The chain runs to 109 residues: Flagellar hook-basal body complex protein FliE (109 aa).

It belongs to the FliE family.

It is found in the bacterial flagellum basal body. The protein is Flagellar hook-basal body complex protein FliE of Pseudomonas syringae pv. tomato (strain ATCC BAA-871 / DC3000).